A 489-amino-acid polypeptide reads, in one-letter code: Ubiquitin-like-specific protease ESD4 (489 aa).

The segment at 43-66 (AMSEDSGKPASSNPTISRISRYPD) is disordered. Over residues 51–60 (PASSNPTISR) the composition is skewed to polar residues. A coiled-coil region spans residues 200–223 (ASSLEAYRKLMQSAEKRNSKLEAL). Residues H380, D397, and C448 contribute to the active site.

It belongs to the peptidase C48 family. As to quaternary structure, interacts with NUA (via N-terminus). Interacts with KIN10. In terms of tissue distribution, expressed in seedlings, leaves, shoots, flowers and roots.

Its subcellular location is the nucleus membrane. It catalyses the reaction Hydrolysis of the alpha-linked peptide bond in the sequence Gly-Gly-|-Ala-Thr-Tyr at the C-terminal end of the small ubiquitin-like modifier (SUMO) propeptide, Smt3, leading to the mature form of the protein. A second reaction involves the cleavage of an epsilon-linked peptide bond between the C-terminal glycine of the mature SUMO and the lysine epsilon-amino group of the target protein.. Inhibited by thiol reagent and N-ethylmaleimide, but not by ubiquitin aldehyde, pepstatin A or benzamidine HCl. Protease that catalyzes two essential functions in the SUMO pathway: processing of full-length SUMOs to their mature forms and deconjugation of SUMO from targeted proteins. Cleaves precursors of SUM1 and SUM2, but not of SUM3 or SUM5. Able to release SUM1 and SUM2 from conjugates, but unable to cleave SUM3. Acts predominantly as an isopeptidase, cleaving SUMO-conjugated proteins better than SUMO peptides. Plays an important role in the control of flowering time. The chain is Ubiquitin-like-specific protease ESD4 (ESD4) from Arabidopsis thaliana (Mouse-ear cress).